A 111-amino-acid chain; its full sequence is uncharacterized protein (111 aa).

Belongs to the SUI1 family.

This is an uncharacterized protein from Synechocystis sp. (strain ATCC 27184 / PCC 6803 / Kazusa).